A 424-amino-acid chain; its full sequence is Imidazolonepropionase (424 aa).

Residues His84 and His86 each contribute to the Fe(3+) site. His84 and His86 together coordinate Zn(2+). 4-imidazolone-5-propanoate contacts are provided by Arg93, Tyr156, and His189. Tyr156 contacts N-formimidoyl-L-glutamate. His254 lines the Fe(3+) pocket. A Zn(2+)-binding site is contributed by His254. Glu257 is a binding site for 4-imidazolone-5-propanoate. Asp328 is a binding site for Fe(3+). Asp328 is a Zn(2+) binding site. Residues Asn330 and Gly332 each contribute to the N-formimidoyl-L-glutamate site. Residue Ser333 participates in 4-imidazolone-5-propanoate binding.

This sequence belongs to the metallo-dependent hydrolases superfamily. HutI family. Zn(2+) serves as cofactor. Requires Fe(3+) as cofactor.

It localises to the cytoplasm. The enzyme catalyses 4-imidazolone-5-propanoate + H2O = N-formimidoyl-L-glutamate. It functions in the pathway amino-acid degradation; L-histidine degradation into L-glutamate; N-formimidoyl-L-glutamate from L-histidine: step 3/3. In terms of biological role, catalyzes the hydrolytic cleavage of the carbon-nitrogen bond in imidazolone-5-propanoate to yield N-formimidoyl-L-glutamate. It is the third step in the universal histidine degradation pathway. This is Imidazolonepropionase from Geobacillus kaustophilus (strain HTA426).